The chain runs to 147 residues: Transthyretin (147 aa).

An N-terminal signal peptide occupies residues 1 to 20 (MASLRLFLLCLAGLVFVSEA). Cys30 carries the post-translational modification Sulfocysteine. Residue Lys35 coordinates L-thyroxine. Residue Glu62 is modified to 4-carboxyglutamate. Ser72 bears the Phosphoserine mark. Glu74 lines the L-thyroxine pocket. An N-linked (GlcNAc...) asparagine glycan is attached at Asn118. An L-thyroxine-binding site is contributed by Ser137.

Belongs to the transthyretin family. Homotetramer. Dimer of dimers. In the homotetramer, subunits assemble around a central channel that can accommodate two ligand molecules. Interacts with RBP4. In terms of processing, sulfonation of the reactive cysteine Cys-30 enhances the stability of the native conformation of TTR, avoiding misassembly of the protein leading to amyloid formation. In terms of tissue distribution, detected in plasma (at protein level). Detected in liver.

The protein localises to the secreted. Thyroid hormone-binding protein. Probably transports thyroxine from the bloodstream to the brain. This is Transthyretin (Ttr) from Mus musculus (Mouse).